The following is a 375-amino-acid chain: F-box/kelch-repeat protein At4g39240 (375 aa).

Positions 1 to 15 (MPFSAASSSSVSSIA) are enriched in low complexity. The interval 1–27 (MPFSAASSSSVSSIAEEPPPKKQHDPS) is disordered. The F-box domain occupies 31-77 (SSYLLLLPDEIILNCLARLPKCYYPVISLVSKTFRRLIASPEIYVER). Kelch repeat units lie at residues 140-186 (EIYV…FFDG), 187-232 (KLYV…RSFA), and 275-321 (KIYT…GNLA).

The protein is F-box/kelch-repeat protein At4g39240 of Arabidopsis thaliana (Mouse-ear cress).